The sequence spans 810 residues: DNA ligase (810 aa).

NAD(+) contacts are provided by residues 46 to 50 (DAEYD), 95 to 96 (SL), and glutamate 129. Lysine 131 (N6-AMP-lysine intermediate) is an active-site residue. NAD(+) is bound by residues arginine 152, glutamate 189, lysine 305, and lysine 329. Zn(2+)-binding residues include cysteine 434, cysteine 437, cysteine 458, and cysteine 464. The tract at residues 528–548 (ERRAESGTAEPPKKAAKKKGD) is disordered. The region spanning 731 to 810 (AAASTFAGKT…DDWLAMVAQG (80 aa)) is the BRCT domain.

The protein belongs to the NAD-dependent DNA ligase family. LigA subfamily. The cofactor is Mg(2+). It depends on Mn(2+) as a cofactor.

The catalysed reaction is NAD(+) + (deoxyribonucleotide)n-3'-hydroxyl + 5'-phospho-(deoxyribonucleotide)m = (deoxyribonucleotide)n+m + AMP + beta-nicotinamide D-nucleotide.. In terms of biological role, DNA ligase that catalyzes the formation of phosphodiester linkages between 5'-phosphoryl and 3'-hydroxyl groups in double-stranded DNA using NAD as a coenzyme and as the energy source for the reaction. It is essential for DNA replication and repair of damaged DNA. The protein is DNA ligase of Methylobacterium radiotolerans (strain ATCC 27329 / DSM 1819 / JCM 2831 / NBRC 15690 / NCIMB 10815 / 0-1).